Consider the following 252-residue polypeptide: MAVERVSTGIPGMDEVLNGGIPERNAVLLTGGPGTGKTIFSQQFIWAGLEEGEPGVFVTLEEHPVQVRKNVEGFGWNFREYEEEGLLAVVDAFTGGIGRASEYEKYVVKDPTDASELIGVIRQAVNDVEAKRVAIDSVTPLYIDKPSVARRIMFRLKRMLAGLGCTSILVNQIAAHERGFGGPGVEHAVDGIIRLDLDEVEGRLWRSLIVWKMRGTAHSMRRHPFEITDEGIRVDPEKVFVKERGEVREVED.

Residues 4–248 (ERVSTGIPGM…VFVKERGEVR (245 aa)) enclose the KaiC domain. 31-38 (GGPGTGKT) provides a ligand contact to ATP.

The protein belongs to the UPF0273 family.

The chain is UPF0273 protein MK0039 from Methanopyrus kandleri (strain AV19 / DSM 6324 / JCM 9639 / NBRC 100938).